We begin with the raw amino-acid sequence, 466 residues long: Glutamate--tRNA ligase (466 aa).

The 'HIGH' region signature appears at 10-20 (PSPTGYLHVGG). 4 residues coordinate Zn(2+): Cys99, Cys101, Cys126, and His128. Residues 237–241 (RLSKR) carry the 'KMSKS' region motif. Lys240 lines the ATP pocket.

The protein belongs to the class-I aminoacyl-tRNA synthetase family. Glutamate--tRNA ligase type 1 subfamily. As to quaternary structure, monomer. The cofactor is Zn(2+).

The protein localises to the cytoplasm. It carries out the reaction tRNA(Glu) + L-glutamate + ATP = L-glutamyl-tRNA(Glu) + AMP + diphosphate. Its function is as follows. Catalyzes the attachment of glutamate to tRNA(Glu) in a two-step reaction: glutamate is first activated by ATP to form Glu-AMP and then transferred to the acceptor end of tRNA(Glu). The protein is Glutamate--tRNA ligase of Trichlorobacter lovleyi (strain ATCC BAA-1151 / DSM 17278 / SZ) (Geobacter lovleyi).